The sequence spans 249 residues: 5'-nucleotidase SurE (249 aa).

The a divalent metal cation site is built by D8, D9, S39, and N91.

The protein belongs to the SurE nucleotidase family. The cofactor is a divalent metal cation.

The protein localises to the cytoplasm. It catalyses the reaction a ribonucleoside 5'-phosphate + H2O = a ribonucleoside + phosphate. Functionally, nucleotidase that shows phosphatase activity on nucleoside 5'-monophosphates. This chain is 5'-nucleotidase SurE, found in Pseudomonas aeruginosa (strain LESB58).